A 1144-amino-acid polypeptide reads, in one-letter code: Adenylate cyclase type 3 (1144 aa).

At 1–79 (MTEDQGFSDP…FKRQRHETLL (79 aa)) the chain is on the cytoplasmic side. 5 helical membrane passes run 80 to 100 (VLVVFAALFDCYVVVMCAVVF), 105 to 125 (LAPLMVAGVGLVLDIILFVLC), 139 to 159 (VPYLLWLLITAQIFSYLGLNF), 173 to 193 (AFFVFSFFITLPLSLSPIVII), and 226 to 246 (ILANVFLYLCAIIVGIMSYYM). Aspartate 324, isoleucine 325, and aspartate 368 together coordinate Mg(2+). ATP is bound by residues 324 to 329 (DIVGFT) and 366 to 368 (LGD). The helical transmembrane segment at 381–401 (EDHAVCSILMGLAMVEAISYV) threads the bilayer. The Cytoplasmic segment spans residues 402-630 (REKTKTGVDM…RYSVEKEKQS (229 aa)). Position 412 (arginine 412) interacts with ATP. A Glycyl lysine isopeptide (Lys-Gly) (interchain with G-Cter in SUMO3) cross-link involves residue lysine 465. Residues 504–563 (QNGLNGSALPNGAPASKPSSPALIETKEPNGSAHASGSTSEEAEEQEAQADNPSFPNPRR) form a disordered region. Serine 523 is modified (phosphoserine). The span at 534–543 (GSAHASGSTS) shows a compositional bias: low complexity. Residue serine 578 is modified to Phosphoserine. 3 helical membrane passes run 631–651 (GAAFSCSCVVLFCTAMVEILI), 662–682 (FVVGEVLLLILTICSMAAIFP), and 706–726 (WAMLAIFILVMANVVDMLSCL). Asparagine 734 carries an N-linked (GlcNAc...) asparagine glycan. The next 3 membrane-spanning stretches (helical) occupy residues 755–775 (VAVLSLIATIMLVQVSHMVKL), 777–797 (LMLLVTGAVTAINLYAWCPVF), and 833–853 (LPLVPSKYSMTVMMFVMMLSF). The Cytoplasmic segment spans residues 854-1144 (YYFSRHVEKL…TLPHQVVDNP (291 aa)). ATP-binding positions include lysine 975, 1062–1064 (DIW), and 1069–1073 (NVASR). Serine 1076 is subject to Phosphoserine; by CaMK2. Lysine 1109 contributes to the ATP binding site.

Belongs to the adenylyl cyclase class-4/guanylyl cyclase family. Mg(2+) serves as cofactor. It depends on Mn(2+) as a cofactor. N-glycosylated. In terms of processing, sumoylated. Sumoylation is required for targeting ot olfactory cilia. Post-translationally, rapidly phosphorylated after stimulation by odorants or forskolin. Phosphorylation by CaMK2 at Ser-1076 down-regulates enzyme activity. In terms of tissue distribution, detected on cilia on the olfactory epithelium (at protein level). Detected on cilia on the olfactory epithelium.

It localises to the cell membrane. The protein localises to the golgi apparatus. Its subcellular location is the cell projection. The protein resides in the cilium. It is found in the cytoplasm. It catalyses the reaction ATP = 3',5'-cyclic AMP + diphosphate. With respect to regulation, specifically activated by the G alpha protein GNAL/G(olf) in signaling cascades triggered by odorant receptors. Activated by forskolin. After forskolin treatment, activity is further increased by calcium/calmodulin. In the absence of forskolin, calcium/calmodulin has little effect on enzyme activity. Its function is as follows. Catalyzes the formation of the signaling molecule cAMP in response to G-protein signaling. Participates in signaling cascades triggered by odorant receptors via its function in cAMP biosynthesis: specifically activated by G alpha protein GNAL/G(olf) in olfactory epithelium. Required for the perception of odorants. Required for normal sperm motility and normal male fertility. Plays a role in regulating insulin levels and body fat accumulation in response to a high fat diet. This is Adenylate cyclase type 3 from Rattus norvegicus (Rat).